Here is a 693-residue protein sequence, read N- to C-terminus: Elongation factor G (693 aa).

The tr-type G domain occupies 8–282 (EKTRNIGIMA…AVIDYLPSPL (275 aa)). Residues 17 to 24 (AHVDAGKT), 81 to 85 (DTPGH), and 135 to 138 (NKMD) contribute to the GTP site.

This sequence belongs to the TRAFAC class translation factor GTPase superfamily. Classic translation factor GTPase family. EF-G/EF-2 subfamily.

Its subcellular location is the cytoplasm. Functionally, catalyzes the GTP-dependent ribosomal translocation step during translation elongation. During this step, the ribosome changes from the pre-translocational (PRE) to the post-translocational (POST) state as the newly formed A-site-bound peptidyl-tRNA and P-site-bound deacylated tRNA move to the P and E sites, respectively. Catalyzes the coordinated movement of the two tRNA molecules, the mRNA and conformational changes in the ribosome. This Streptococcus gordonii (strain Challis / ATCC 35105 / BCRC 15272 / CH1 / DL1 / V288) protein is Elongation factor G.